The sequence spans 1383 residues: DNA-directed RNA polymerase subunit beta'' (1383 aa).

4 residues coordinate Zn(2+): Cys220, Cys289, Cys296, and Cys299.

This sequence belongs to the RNA polymerase beta' chain family. RpoC2 subfamily. In plastids the minimal PEP RNA polymerase catalytic core is composed of four subunits: alpha, beta, beta', and beta''. When a (nuclear-encoded) sigma factor is associated with the core the holoenzyme is formed, which can initiate transcription. Zn(2+) serves as cofactor.

Its subcellular location is the plastid. The protein resides in the chloroplast. The enzyme catalyses RNA(n) + a ribonucleoside 5'-triphosphate = RNA(n+1) + diphosphate. DNA-dependent RNA polymerase catalyzes the transcription of DNA into RNA using the four ribonucleoside triphosphates as substrates. In Oenothera argillicola (Appalachian evening primrose), this protein is DNA-directed RNA polymerase subunit beta''.